The sequence spans 340 residues: Uroporphyrinogen decarboxylase (340 aa).

Residues 21-25 (RQAGR), Asp71, Tyr148, Ser203, and His316 contribute to the substrate site.

The protein belongs to the uroporphyrinogen decarboxylase family. Homodimer.

Its subcellular location is the cytoplasm. It catalyses the reaction uroporphyrinogen III + 4 H(+) = coproporphyrinogen III + 4 CO2. It functions in the pathway porphyrin-containing compound metabolism; protoporphyrin-IX biosynthesis; coproporphyrinogen-III from 5-aminolevulinate: step 4/4. Functionally, catalyzes the decarboxylation of four acetate groups of uroporphyrinogen-III to yield coproporphyrinogen-III. The chain is Uroporphyrinogen decarboxylase from Campylobacter jejuni subsp. jejuni serotype O:6 (strain 81116 / NCTC 11828).